The following is a 511-amino-acid chain: Peroxisomal N(1)-acetyl-spermine/spermidine oxidase (511 aa).

Met1 carries the N-acetylmethionine modification. Residues Ala24, Glu45, Arg53, and 69 to 70 contribute to the FAD site; that span reads HW. The substrate site is built by His72 and Val194. Val247 serves as a coordination point for FAD. A substrate-binding site is contributed by Asn320. FAD-binding positions include Glu472 and 481–482; that span reads TT. The short motif at 509 to 511 is the Microbody targeting signal element; that stretch reads PRL.

It belongs to the flavin monoamine oxidase family. In terms of assembly, monomer. FAD serves as cofactor. As to expression, widely expressed. Not detected in spleen. Expressed at lower level in neoplastic tissues.

It is found in the peroxisome. The protein localises to the cytoplasm. It catalyses the reaction N(1)-acetylspermine + O2 + H2O = 3-acetamidopropanal + spermidine + H2O2. It carries out the reaction N(1)-acetylspermidine + O2 + H2O = 3-acetamidopropanal + putrescine + H2O2. The enzyme catalyses N(1),N(12)-diacetylspermine + O2 + H2O = 3-acetamidopropanal + N(1)-acetylspermidine + H2O2. It functions in the pathway amine and polyamine metabolism; spermine metabolism. Flavoenzyme which catalyzes the oxidation of N(1)-acetylspermine to spermidine and is thus involved in the polyamine back-conversion. Can also oxidize N(1)-acetylspermidine to putrescine. Substrate specificity: N(1)-acetylspermine = N(1)-acetylspermidine &gt; N(1),N(12)-diacylspermine &gt;&gt; spermine. Does not oxidize spermidine. Plays an important role in the regulation of polyamine intracellular concentration and has the potential to act as a determinant of cellular sensitivity to the antitumor polyamine analogs. This is Peroxisomal N(1)-acetyl-spermine/spermidine oxidase (PAOX) from Homo sapiens (Human).